The sequence spans 290 residues: NAD kinase (290 aa).

The active-site Proton acceptor is the aspartate 72. Residues 72-73 (DG), lysine 77, 145-146 (NE), aspartate 175, 186-191 (TAYSLS), and alanine 210 each bind NAD(+).

Belongs to the NAD kinase family. It depends on a divalent metal cation as a cofactor.

It localises to the cytoplasm. It catalyses the reaction NAD(+) + ATP = ADP + NADP(+) + H(+). Functionally, involved in the regulation of the intracellular balance of NAD and NADP, and is a key enzyme in the biosynthesis of NADP. Catalyzes specifically the phosphorylation on 2'-hydroxyl of the adenosine moiety of NAD to yield NADP. The protein is NAD kinase of Bacteroides fragilis (strain YCH46).